Consider the following 394-residue polypeptide: Aromatic aminotransferase ISS1 (394 aa).

G2 bears the N-acetylglycine mark. A substrate-binding site is contributed by G38. Pyridoxal 5'-phosphate is bound by residues Y64, 98–99, Y123, N176, Y207, and 230–232; these read AN and SFS. Substrate contacts are provided by Y123 and N176. K233 carries the N6-(pyridoxal phosphate)lysine modification. R241 lines the pyridoxal 5'-phosphate pocket. Substrate contacts are provided by R362 and R374.

The protein belongs to the class-I pyridoxal-phosphate-dependent aminotransferase family. As to quaternary structure, homodimer. Pyridoxal 5'-phosphate is required as a cofactor. Expressed in roots, cotyledons and flowers.

The protein resides in the cytoplasm. The enzyme catalyses a 2-oxocarboxylate + L-methionine = 4-methylsulfanyl-2-oxobutanoate + an L-alpha-amino acid. It catalyses the reaction L-tryptophan + 2-oxoglutarate = indole-3-pyruvate + L-glutamate. The catalysed reaction is L-tyrosine + 2-oxoglutarate = 3-(4-hydroxyphenyl)pyruvate + L-glutamate. Its function is as follows. Coordinates and prevents auxin (IAA) and ethylene biosynthesis, thus regulating auxin homeostasis in young seedlings. Shows aminotransferase activity with methionine; can use the ethylene biosynthetic intermediate L-methionine (L-Met) as an amino donor and the auxin biosynthetic intermediate, indole-3-pyruvic acid (3-IPA) as an amino acceptor to produce L-tryptophan (L-Trp) and 2-oxo-4-methylthiobutyric acid (KMBA). Can also use tryptophan (Trp), phenylalanine (Phe), and tyrosine (Tyr) as substrates. Regulates tryptophan (Trp) homeostasis and catabolism in mature plants. Also possibly involved in the metabolism of other aromatic amino acids and phenylpropanoid homeostasis. This Arabidopsis thaliana (Mouse-ear cress) protein is Aromatic aminotransferase ISS1.